Reading from the N-terminus, the 365-residue chain is Spermine synthase (365 aa).

Residue Ala2 is modified to N-acetylalanine. Ser57 bears the Phosphoserine mark. Positions 121-361 (RYWPTADGRL…ELWVFYTVWK (241 aa)) constitute a PABS domain. Gln147 lines the S-adenosyl 3-(methylsulfanyl)propylamine pocket. 2 residues coordinate spermidine: Tyr176 and Asp200. S-adenosyl 3-(methylsulfanyl)propylamine-binding positions include Glu219 and 254-255 (DC). Residue Asp275 is the Proton acceptor of the active site. The spermidine site is built by Tyr350 and Glu352.

Belongs to the spermidine/spermine synthase family. Homodimer. Dimerization is mediated through the N-terminal domain and seems to be required for activity as deletion of the N-terminal domain causes complete loss of activity.

It catalyses the reaction S-adenosyl 3-(methylsulfanyl)propylamine + spermidine = spermine + S-methyl-5'-thioadenosine + H(+). The protein operates within amine and polyamine biosynthesis; spermine biosynthesis; spermine from spermidine: step 1/1. Functionally, catalyzes the production of spermine from spermidine and decarboxylated S-adenosylmethionine (dcSAM). The polypeptide is Spermine synthase (SMS) (Bos taurus (Bovine)).